A 100-amino-acid polypeptide reads, in one-letter code: Urease subunit gamma (100 aa).

The protein belongs to the urease gamma subunit family. In terms of assembly, heterotrimer of UreA (gamma), UreB (beta) and UreC (alpha) subunits. Three heterotrimers associate to form the active enzyme.

Its subcellular location is the cytoplasm. It carries out the reaction urea + 2 H2O + H(+) = hydrogencarbonate + 2 NH4(+). The protein operates within nitrogen metabolism; urea degradation; CO(2) and NH(3) from urea (urease route): step 1/1. This chain is Urease subunit gamma, found in Proteus hauseri.